The sequence spans 455 residues: Ornithine decarboxylase (455 aa).

Residue Lys67 is modified to N6-(pyridoxal phosphate)lysine. Residues Ser197, Gly234, and 271-274 (EPGR) each bind pyridoxal 5'-phosphate. Ser297 is subject to Phosphoserine; by CK2. Position 325–326 (325–326 (YD)) interacts with substrate. Cys354 serves as the catalytic Proton donor; shared with dimeric partner. Cys354 is subject to S-nitrosocysteine. Asp355 serves as a coordination point for substrate. A pyridoxal 5'-phosphate-binding site is contributed by Tyr383.

Belongs to the Orn/Lys/Arg decarboxylase class-II family. As to quaternary structure, homodimer. Only the dimer is catalytically active, as the active sites are constructed of residues from both monomers. Requires pyridoxal 5'-phosphate as cofactor.

It catalyses the reaction L-ornithine + H(+) = putrescine + CO2. It functions in the pathway amine and polyamine biosynthesis; putrescine biosynthesis via L-ornithine pathway; putrescine from L-ornithine: step 1/1. With respect to regulation, inhibited by antizymes (AZs) OAZ1, OAZ2 and OAZ3 in response to polyamine levels. AZs inhibit the assembly of the functional homodimer by binding to ODC monomers. Additionally, OAZ1 targets ODC monomers for ubiquitin-independent proteolytic destruction by the 26S proteasome. Functionally, catalyzes the first and rate-limiting step of polyamine biosynthesis that converts ornithine into putrescine, which is the precursor for the polyamines, spermidine and spermine. Polyamines are essential for cell proliferation and are implicated in cellular processes, ranging from DNA replication to apoptosis. In Cricetulus griseus (Chinese hamster), this protein is Ornithine decarboxylase (ODC1).